Here is a 326-residue protein sequence, read N- to C-terminus: tRNA-cytidine(32) 2-sulfurtransferase (326 aa).

Residues 63-68 (SGGKDS) carry the PP-loop motif motif. 3 residues coordinate [4Fe-4S] cluster: C138, C141, and C229.

This sequence belongs to the TtcA family. Homodimer. Mg(2+) serves as cofactor. Requires [4Fe-4S] cluster as cofactor.

The protein resides in the cytoplasm. It catalyses the reaction cytidine(32) in tRNA + S-sulfanyl-L-cysteinyl-[cysteine desulfurase] + AH2 + ATP = 2-thiocytidine(32) in tRNA + L-cysteinyl-[cysteine desulfurase] + A + AMP + diphosphate + H(+). Its pathway is tRNA modification. Functionally, catalyzes the ATP-dependent 2-thiolation of cytidine in position 32 of tRNA, to form 2-thiocytidine (s(2)C32). The sulfur atoms are provided by the cysteine/cysteine desulfurase (IscS) system. The sequence is that of tRNA-cytidine(32) 2-sulfurtransferase from Leptothrix cholodnii (strain ATCC 51168 / LMG 8142 / SP-6) (Leptothrix discophora (strain SP-6)).